The chain runs to 418 residues: AP-3 complex subunit mu-1 (418 aa).

Positions 176–417 (NNEAYFDVVE…ITKAGKFQVR (242 aa)) constitute an MHD domain.

This sequence belongs to the adaptor complexes medium subunit family. Adaptor protein complex 3 (AP-3) is a heterotetramer composed of two large adaptins (delta-type subunit AP3D1 and beta-type subunit AP3B1 or AP3B2), a medium adaptin (mu-type subunit AP3M1 or AP3M2) and a small adaptin (sigma-type subunit APS1 or AP3S2). Interacts with AGAP1. AP-3 associates with the BLOC-1 complex.

The protein localises to the golgi apparatus. Its subcellular location is the cytoplasmic vesicle membrane. Functionally, part of the AP-3 complex, an adaptor-related complex which is not clathrin-associated. The complex is associated with the Golgi region as well as more peripheral structures. It facilitates the budding of vesicles from the Golgi membrane and may be directly involved in trafficking to lysosomes. In concert with the BLOC-1 complex, AP-3 is required to target cargos into vesicles assembled at cell bodies for delivery into neurites and nerve terminals. This Rattus norvegicus (Rat) protein is AP-3 complex subunit mu-1 (Ap3m1).